Consider the following 490-residue polypeptide: Dual specificity protein kinase CLK3 (490 aa).

The tract at residues 1–138 (MHHCKRYRSP…SKRSSRSVED (138 aa)) is disordered. The residue at position 7 (Y7) is a Phosphotyrosine. Phosphoserine is present on residues S9, S49, S51, S67, S76, and S78. Composition is skewed to basic and acidic residues over residues 26-56 (YSREHEGRLRYPSRREPPPRRSRSRSHDRIP) and 63-76 (EHRDSDTYRCEERS). A compositionally biased stretch (basic residues) spans 88-116 (RSRHRRRSRERAPYRTRKHAHHCHKRRTR). A compositionally biased stretch (low complexity) spans 117–130 (SCSSASSRSQQSSK). S135 is subject to Phosphoserine. The Protein kinase domain occupies 156-472 (YEIVGNLGEG…LAEALLHPFF (317 aa)). Residues 162–170 (LGEGTFGKV) and K186 each bind ATP. D283 serves as the catalytic Proton acceptor.

This sequence belongs to the protein kinase superfamily. CMGC Ser/Thr protein kinase family. Lammer subfamily. Autophosphorylates on all three types of residues. In terms of tissue distribution, present at high levels in testis and ovary. In testis, expression is restricted to elongated, maturing spermatozoa. Also present in spleen, brain, lung and liver (at protein level).

Its subcellular location is the nucleus. It is found in the cytoplasm. The protein localises to the cytoplasmic vesicle. The protein resides in the secretory vesicle. It localises to the acrosome. It catalyses the reaction L-seryl-[protein] + ATP = O-phospho-L-seryl-[protein] + ADP + H(+). The catalysed reaction is L-threonyl-[protein] + ATP = O-phospho-L-threonyl-[protein] + ADP + H(+). It carries out the reaction L-tyrosyl-[protein] + ATP = O-phospho-L-tyrosyl-[protein] + ADP + H(+). Its activity is regulated as follows. Leucettine L41 inhibits its kinase activity and affects the regulation of alternative splicing mediated by phosphorylation of SR proteins. Its function is as follows. Dual specificity kinase acting on both serine/threonine and tyrosine-containing substrates. Phosphorylates serine- and arginine-rich (SR) proteins of the spliceosomal complex. May be a constituent of a network of regulatory mechanisms that enable SR proteins to control RNA splicing and can cause redistribution of SR proteins from speckles to a diffuse nucleoplasmic distribution. Phosphorylates SRSF1 and SRSF3. Regulates the alternative splicing of tissue factor (F3) pre-mRNA in endothelial cells. The chain is Dual specificity protein kinase CLK3 from Mus musculus (Mouse).